Consider the following 155-residue polypeptide: Small ribosomal subunit protein mS86 (155 aa).

A mitochondrion-targeting transit peptide spans 1–27 (MHYMGLFSRAGNIFRQPRALQASNAML). Positions 36–114 (SKIFVGGLSP…RIIGVHPADS (79 aa)) constitute an RRM domain.

The protein belongs to the GR-RBP family. As to quaternary structure, component of the mitochondrial ribosome small subunit.

The protein resides in the mitochondrion. Its function is as follows. Possibly has a role in RNA transcription or processing during stress. This chain is Small ribosomal subunit protein mS86 (RBG6), found in Arabidopsis thaliana (Mouse-ear cress).